Here is a 281-residue protein sequence, read N- to C-terminus: NAD kinase (281 aa).

D61 serves as the catalytic Proton acceptor. NAD(+)-binding positions include 61-62 (DG), 134-135 (ND), R145, D164, 175-180 (TAYSLS), and Q234.

Belongs to the NAD kinase family. The cofactor is a divalent metal cation.

The protein resides in the cytoplasm. The enzyme catalyses NAD(+) + ATP = ADP + NADP(+) + H(+). In terms of biological role, involved in the regulation of the intracellular balance of NAD and NADP, and is a key enzyme in the biosynthesis of NADP. Catalyzes specifically the phosphorylation on 2'-hydroxyl of the adenosine moiety of NAD to yield NADP. This is NAD kinase from Clostridium botulinum (strain Kyoto / Type A2).